The primary structure comprises 321 residues: 4-hydroxy-3-methylbut-2-enyl diphosphate reductase (321 aa).

[4Fe-4S] cluster is bound at residue Cys13. Positions 41 and 75 each coordinate (2E)-4-hydroxy-3-methylbut-2-enyl diphosphate. Dimethylallyl diphosphate is bound by residues His41 and His75. 2 residues coordinate isopentenyl diphosphate: His41 and His75. Cys97 serves as a coordination point for [4Fe-4S] cluster. His125 is a (2E)-4-hydroxy-3-methylbut-2-enyl diphosphate binding site. Residue His125 participates in dimethylallyl diphosphate binding. Residue His125 coordinates isopentenyl diphosphate. The active-site Proton donor is the Glu127. Thr168 lines the (2E)-4-hydroxy-3-methylbut-2-enyl diphosphate pocket. A [4Fe-4S] cluster-binding site is contributed by Cys225. (2E)-4-hydroxy-3-methylbut-2-enyl diphosphate contacts are provided by Ser253, Ser254, Asn255, and Ser302. Residues Ser253, Ser254, Asn255, and Ser302 each contribute to the dimethylallyl diphosphate site. Ser253, Ser254, Asn255, and Ser302 together coordinate isopentenyl diphosphate.

Belongs to the IspH family. [4Fe-4S] cluster is required as a cofactor.

It carries out the reaction isopentenyl diphosphate + 2 oxidized [2Fe-2S]-[ferredoxin] + H2O = (2E)-4-hydroxy-3-methylbut-2-enyl diphosphate + 2 reduced [2Fe-2S]-[ferredoxin] + 2 H(+). It catalyses the reaction dimethylallyl diphosphate + 2 oxidized [2Fe-2S]-[ferredoxin] + H2O = (2E)-4-hydroxy-3-methylbut-2-enyl diphosphate + 2 reduced [2Fe-2S]-[ferredoxin] + 2 H(+). Its pathway is isoprenoid biosynthesis; dimethylallyl diphosphate biosynthesis; dimethylallyl diphosphate from (2E)-4-hydroxy-3-methylbutenyl diphosphate: step 1/1. It functions in the pathway isoprenoid biosynthesis; isopentenyl diphosphate biosynthesis via DXP pathway; isopentenyl diphosphate from 1-deoxy-D-xylulose 5-phosphate: step 6/6. Functionally, catalyzes the conversion of 1-hydroxy-2-methyl-2-(E)-butenyl 4-diphosphate (HMBPP) into a mixture of isopentenyl diphosphate (IPP) and dimethylallyl diphosphate (DMAPP). Acts in the terminal step of the DOXP/MEP pathway for isoprenoid precursor biosynthesis. In Pelodictyon phaeoclathratiforme (strain DSM 5477 / BU-1), this protein is 4-hydroxy-3-methylbut-2-enyl diphosphate reductase.